The sequence spans 488 residues: E3 ubiquitin-protein ligase TRIM39 (488 aa).

An RING-type zinc finger spans residues 29 to 70 (CSVCLEYLKEPVIIECGHNFCKACITRWWEDLERDFPCPVCR). A B box-type zinc finger spans residues 102–143 (RDESLCSQHHEPLSLFCYEDQEAVCLICAISHTHRAHTVVPM). Positions 107, 110, 129, and 135 each coordinate Zn(2+). The stretch at 181–250 (ELKRLVESRR…AHLAAEVEGK (70 aa)) forms a coiled coil. Interaction with CDKN1A regions lie at residues 268–307 (KCEKVKTMEVTSVSIELEKNFSHFPRQYFALRKILKQLIA) and 359–488 (TSGR…TDWE). The region spanning 289 to 484 (SHFPRQYFAL…NAAPLTIRPP (196 aa)) is the B30.2/SPRY domain.

This sequence belongs to the TRIM/RBCC family. Interacts with MOAP1. Interacts with CDKN1A. Autoubiquitinated.

It localises to the cytoplasm. The protein resides in the cytosol. The protein localises to the mitochondrion. It is found in the nucleus. The catalysed reaction is S-ubiquitinyl-[E2 ubiquitin-conjugating enzyme]-L-cysteine + [acceptor protein]-L-lysine = [E2 ubiquitin-conjugating enzyme]-L-cysteine + N(6)-ubiquitinyl-[acceptor protein]-L-lysine.. It participates in protein modification; protein ubiquitination. Its function is as follows. E3 ubiquitin-protein ligase. May facilitate apoptosis by inhibiting APC/C-Cdh1-mediated poly-ubiquitination and subsequent proteasome-mediated degradation of the pro-apoptotic protein MOAP1. Regulates the G1/S transition of the cell cycle and DNA damage-induced G2 arrest by stabilizing CDKN1A/p21. Positively regulates CDKN1A/p21 stability by competing with DTL for CDKN1A/p21 binding, therefore disrupting DCX(DTL) E3 ubiquitin ligase complex-mediated CDKN1A/p21 ubiquitination and degradation. The chain is E3 ubiquitin-protein ligase TRIM39 (Trim39) from Rattus norvegicus (Rat).